A 616-amino-acid polypeptide reads, in one-letter code: Dihydroxy-acid dehydratase (616 aa).

Asp81 lines the Mg(2+) pocket. [2Fe-2S] cluster is bound at residue Cys122. Positions 123 and 124 each coordinate Mg(2+). An N6-carboxylysine modification is found at Lys124. Residue Cys195 coordinates [2Fe-2S] cluster. Glu491 lines the Mg(2+) pocket. Residue Ser517 is the Proton acceptor of the active site.

It belongs to the IlvD/Edd family. As to quaternary structure, homodimer. [2Fe-2S] cluster is required as a cofactor. It depends on Mg(2+) as a cofactor.

It carries out the reaction (2R)-2,3-dihydroxy-3-methylbutanoate = 3-methyl-2-oxobutanoate + H2O. It catalyses the reaction (2R,3R)-2,3-dihydroxy-3-methylpentanoate = (S)-3-methyl-2-oxopentanoate + H2O. The protein operates within amino-acid biosynthesis; L-isoleucine biosynthesis; L-isoleucine from 2-oxobutanoate: step 3/4. Its pathway is amino-acid biosynthesis; L-valine biosynthesis; L-valine from pyruvate: step 3/4. Functionally, functions in the biosynthesis of branched-chain amino acids. Catalyzes the dehydration of (2R,3R)-2,3-dihydroxy-3-methylpentanoate (2,3-dihydroxy-3-methylvalerate) into 2-oxo-3-methylpentanoate (2-oxo-3-methylvalerate) and of (2R)-2,3-dihydroxy-3-methylbutanoate (2,3-dihydroxyisovalerate) into 2-oxo-3-methylbutanoate (2-oxoisovalerate), the penultimate precursor to L-isoleucine and L-valine, respectively. This is Dihydroxy-acid dehydratase from Escherichia coli O157:H7 (strain EC4115 / EHEC).